Consider the following 386-residue polypeptide: V-type proton ATPase subunit B 2 (386 aa).

The protein belongs to the ATPase alpha/beta chains family. V-ATPase is a heteromultimeric enzyme composed of a peripheral catalytic V1 complex (main components: subunits A, B, C, D, E, and F) attached to an integral membrane V0 proton pore complex (main component: the proteolipid protein).

Non-catalytic subunit of the peripheral V1 complex of vacuolar ATPase. V-ATPase is responsible for acidifying a variety of intracellular compartments in eukaryotic cells. In Gossypium hirsutum (Upland cotton), this protein is V-type proton ATPase subunit B 2.